A 69-amino-acid chain; its full sequence is MSVLTPLLLRGLTGPARRLPVPRAQIHSKPPREQLGTMDIAIGLTSCFLCFLLPSGWVLSHMENYKKRE.

Residues 1–25 constitute a mitochondrion transit peptide; sequence MSVLTPLLLRGLTGPARRLPVPRAQ. The SIFI-degron motif lies at 2–19; the sequence is SVLTPLLLRGLTGPARRL. Topologically, residues 26 to 36 are mitochondrial matrix; the sequence is IHSKPPREQLG. Residues 37-60 traverse the membrane as a helical segment; the sequence is TMDIAIGLTSCFLCFLLPSGWVLS. At 61–69 the chain is on the mitochondrial intermembrane side; the sequence is HMENYKKRE.

The protein belongs to the cytochrome c oxidase VIII family. As to quaternary structure, component of the cytochrome c oxidase (complex IV, CIV), a multisubunit enzyme composed of 14 subunits. The complex is composed of a catalytic core of 3 subunits MT-CO1, MT-CO2 and MT-CO3, encoded in the mitochondrial DNA, and 11 supernumerary subunits COX4I1 (or COX4I2), COX5A, COX5B, COX6A2 (or COX6A1), COX6B1 (or COX6B2), COX6C, COX7A1 (or COX7A2), COX7B, COX7C, COX8B and NDUFA4, which are encoded in the nuclear genome. The complex exists as a monomer or a dimer and forms supercomplexes (SCs) in the inner mitochondrial membrane with NADH-ubiquinone oxidoreductase (complex I, CI) and ubiquinol-cytochrome c oxidoreductase (cytochrome b-c1 complex, complex III, CIII), resulting in different assemblies (supercomplex SCI(1)III(2)IV(1) and megacomplex MCI(2)III(2)IV(2)). Post-translationally, in response to mitochondrial stress, the precursor protein is ubiquitinated by the SIFI complex in the cytoplasm before mitochondrial import, leading to its degradation. Within the SIFI complex, UBR4 initiates ubiquitin chain that are further elongated or branched by KCMF1.

It is found in the mitochondrion inner membrane. It participates in energy metabolism; oxidative phosphorylation. Its function is as follows. Component of the cytochrome c oxidase, the last enzyme in the mitochondrial electron transport chain which drives oxidative phosphorylation. The respiratory chain contains 3 multisubunit complexes succinate dehydrogenase (complex II, CII), ubiquinol-cytochrome c oxidoreductase (cytochrome b-c1 complex, complex III, CIII) and cytochrome c oxidase (complex IV, CIV), that cooperate to transfer electrons derived from NADH and succinate to molecular oxygen, creating an electrochemical gradient over the inner membrane that drives transmembrane transport and the ATP synthase. Cytochrome c oxidase is the component of the respiratory chain that catalyzes the reduction of oxygen to water. Electrons originating from reduced cytochrome c in the intermembrane space (IMS) are transferred via the dinuclear copper A center (CU(A)) of subunit 2 and heme A of subunit 1 to the active site in subunit 1, a binuclear center (BNC) formed by heme A3 and copper B (CU(B)). The BNC reduces molecular oxygen to 2 water molecules using 4 electrons from cytochrome c in the IMS and 4 protons from the mitochondrial matrix. The chain is Cytochrome c oxidase subunit 8A, mitochondrial (COX8A) from Bos taurus (Bovine).